A 203-amino-acid chain; its full sequence is Glycerol-3-phosphate acyltransferase 1 (203 aa).

A run of 6 helical transmembrane segments spans residues 2-22 (LNFF…SHII), 52-72 (GFPA…FFVW), 82-102 (VIAF…FLKF), 117-137 (VLTK…FSIL), 150-168 (EDAF…YTMW), and 170-190 (VFNG…IVFY).

The protein belongs to the PlsY family. As to quaternary structure, probably interacts with PlsX.

The protein localises to the cell inner membrane. The catalysed reaction is an acyl phosphate + sn-glycerol 3-phosphate = a 1-acyl-sn-glycero-3-phosphate + phosphate. It functions in the pathway lipid metabolism; phospholipid metabolism. Its function is as follows. Catalyzes the transfer of an acyl group from acyl-phosphate (acyl-PO(4)) to glycerol-3-phosphate (G3P) to form lysophosphatidic acid (LPA). This enzyme utilizes acyl-phosphate as fatty acyl donor, but not acyl-CoA or acyl-ACP. The chain is Glycerol-3-phosphate acyltransferase 1 from Thermotoga maritima (strain ATCC 43589 / DSM 3109 / JCM 10099 / NBRC 100826 / MSB8).